A 1274-amino-acid polypeptide reads, in one-letter code: Myosin-1 (1274 aa).

The interval 1–28 is disordered; the sequence is MAPSKKAGKKGAVGGFLSGASKPQKVQK. In terms of domain architecture, Myosin motor spans 41 to 721; the sequence is AGVPDMTLLS…TLFYLEGERD (681 aa). 134–141 provides a ligand contact to ATP; the sequence is GESGAGKT. The residue at position 363 (Ser-363) is a Phosphoserine. Positions 410–492 are actin-binding; that stretch reads VIGVLDIYGF…AGIFATLNDA (83 aa). 2 consecutive IQ domains span residues 725–745 and 746–771; these read HTMA…KHEA and ATKI…YGHQ. The 191-residue stretch at 779–969 folds into the TH1 domain; it reads RRRFSLLGMR…TIQVGSGEPP (191 aa). Disordered regions lie at residues 951–1029, 1042–1071, and 1116–1248; these read RGDA…PVVT, ARAP…PKEF, and PSNY…QVAQ. Residues 957-974 are compositionally biased toward polar residues; the sequence is KSHTIQVGSGEPPNSLSN. Positions 1042 to 1053 are enriched in low complexity; sequence ARAPPSIPGRAA. 2 stretches are compositionally biased toward pro residues: residues 1054–1067 and 1126–1138; these read APPP…PAGP and APPP…PPSR. Residues 1067–1125 enclose the SH3 domain; it reads PPKEFYKALYNFTGQEGEMNLVKGEEVEVKEKDDNGWWMVVKNGQEGWAPSNYLKKVEQ. 2 stretches are compositionally biased toward low complexity: residues 1139–1157 and 1170–1226; these read PVAA…PAVT and AASA…IGGK.

It belongs to the TRAFAC class myosin-kinesin ATPase superfamily. Myosin family. Post-translationally, phosphorylation of the TEDS site (Ser-363) is required for the polarization of the actin cytoskeleton. Phosphorylation probably activates the myosin-I ATPase activity.

The protein localises to the cytoplasm. It is found in the cytoskeleton. It localises to the actin patch. Its function is as follows. Type-I myosin implicated in the organization of the actin cytoskeleton. Required for proper actin cytoskeleton polarization. At the cell cortex, assembles in patch-like structures together with proteins from the actin-polymerizing machinery and promotes actin assembly. Functions as actin nucleation-promoting factor (NPF) for the Arp2/3 complex. The polypeptide is Myosin-1 (MYO1) (Cryptococcus neoformans var. neoformans serotype D (strain B-3501A) (Filobasidiella neoformans)).